Consider the following 325-residue polypeptide: Transcription initiation factor IIB (325 aa).

The TFIIB-type zinc-finger motif lies at 19–52; the sequence is NKLWCMVCRIQDPDIIEDYAKGDLICRGCGVVVG. Residues C23, C26, C44, and C47 each contribute to the Zn(2+) site. Tandem repeats lie at residues 131-207 and 227-303.

Belongs to the TFIIB family.

Its subcellular location is the nucleus. In terms of biological role, general transcription factor that plays a role in transcription initiation by RNA polymerase II (Pol II). Involved in the pre-initiation complex (PIC) formation and Pol II recruitment at promoter DNA. This is Transcription initiation factor IIB (gtf2b) from Dictyostelium discoideum (Social amoeba).